The sequence spans 208 residues: FMN-dependent NADH:quinone oxidoreductase (208 aa).

FMN contacts are provided by residues 17–19 (SNS), 99–102 (MWNL), and 143–146 (SRGG).

Belongs to the azoreductase type 1 family. In terms of assembly, homodimer. It depends on FMN as a cofactor.

It carries out the reaction 2 a quinone + NADH + H(+) = 2 a 1,4-benzosemiquinone + NAD(+). The enzyme catalyses N,N-dimethyl-1,4-phenylenediamine + anthranilate + 2 NAD(+) = 2-(4-dimethylaminophenyl)diazenylbenzoate + 2 NADH + 2 H(+). Quinone reductase that provides resistance to thiol-specific stress caused by electrophilic quinones. Its function is as follows. Also exhibits azoreductase activity. Catalyzes the reductive cleavage of the azo bond in aromatic azo compounds to the corresponding amines. The chain is FMN-dependent NADH:quinone oxidoreductase from Staphylococcus aureus (strain MRSA252).